The sequence spans 592 residues: MGEQLNGLKRTHMCGELTVEDVDKYVVVMGWVQRRRDHGGLVFIDLRDRTGIVQVVFSNEVSSEAFEKVQSVRSEYVLAIEGKVVKRSPENVNPKISTGEIEIYANTLKILSKSETPPFPIEDRSNVSEAVRLKYRYLDLRRPSMQKNLMTRFKITKVVRDFLNKNGFIEIETPLLIKSTPEGARDYLVPSRIYPGKFYALPQSPQIFKQLLMISGFDKYYQIAKCLRDEDLRADRQPEFTQIDIEMSFVEVEDVLKINEKMIAEIFKETLGIDVPIPFKRLSYQESMERFGTDKPDLRFGMELKDLSDIVAQSEFNVFKTALKNNGSVRGINVKGAASMPRRQLDELVEFAKTYGAKGLLWIQVFEKEVKSPATKFLSEEEMKKILERLEAEAGDLLLIVADKDEIVFDTLAHLRLELGKRFNLIDENKYEFVWIVDFPLLEYDEGEKRYVAKHHPFTAPKDEDIELLEKEPLKVRAKAYDIVLNGTEIGGGSIRIHDTELQKRMFKVLGFSEEKAWERFGFLMEAFKYGAPPHGGIAYGLDRLAMIITGSDTIRDVIAFPKTQNAVCLMTDAPSEVSEEQLKELHIKVDL.

L-aspartate is bound at residue Glu182. Residues 206–209 (QIFK) are aspartate. L-aspartate is bound at residue Arg228. ATP contacts are provided by residues 228–230 (RDE) and Gln237. His455 is a binding site for L-aspartate. Glu489 is a binding site for ATP. Arg496 is a binding site for L-aspartate. 541-544 (GLDR) provides a ligand contact to ATP.

It belongs to the class-II aminoacyl-tRNA synthetase family. Type 1 subfamily. Homodimer.

It localises to the cytoplasm. It catalyses the reaction tRNA(Asx) + L-aspartate + ATP = L-aspartyl-tRNA(Asx) + AMP + diphosphate. Functionally, aspartyl-tRNA synthetase with relaxed tRNA specificity since it is able to aspartylate not only its cognate tRNA(Asp) but also tRNA(Asn). Reaction proceeds in two steps: L-aspartate is first activated by ATP to form Asp-AMP and then transferred to the acceptor end of tRNA(Asp/Asn). This is Aspartate--tRNA(Asp/Asn) ligase from Thermoanaerobacter sp. (strain X514).